The chain runs to 143 residues: Putative pre-16S rRNA nuclease (143 aa).

Belongs to the YqgF nuclease family.

The protein localises to the cytoplasm. Could be a nuclease involved in processing of the 5'-end of pre-16S rRNA. The polypeptide is Putative pre-16S rRNA nuclease (Mycoplasma capricolum subsp. capricolum (strain California kid / ATCC 27343 / NCTC 10154)).